Here is a 428-residue protein sequence, read N- to C-terminus: MMHAEIVSIGDELLKGQRVNTNAASIAAMLSLEGVPVRRITACSDREEEMQEVFSEALGRSELVLVTGGLGPTRDDRTRNAVLKLLNRGLTLDPGSLREVELRVFARGREMTELMRSQAMVVEGSLAIPNTKGTAAGMILNCGPRFSERHLVLMPGVPVEMQAMMEGTVLPWVRERSGTTIIHTPVKTIGVGEATLAEMIVSVEDALPEGTTVAYLPHGAGVDVMVSTIAEARERAEEDNAAVAGAISRLAAEFVYAVGNRSLEETILDMLRGQQETLAIAESCTGGLVASRITDVAGSSGVFTGGFVVYSNIAKEVQLGVSPGLLDAFGAVSQEVARAMALGCLRRSGATIAIATTGIAGPGGATPDKPVGMLALGLARRTAGSQGPHVESSVLYMHGDRHQNKLRFSQAALRMLWEALRRSGSSSE.

It belongs to the CinA family.

The chain is CinA-like protein from Chlorobium phaeovibrioides (strain DSM 265 / 1930) (Prosthecochloris vibrioformis (strain DSM 265)).